Reading from the N-terminus, the 110-residue chain is Insulin (110 aa).

The first 24 residues, 1–24 (MALWMRLLPLLALLALWGPDPAAA), serve as a signal peptide directing secretion. 3 disulfide bridges follow: Cys-31-Cys-96, Cys-43-Cys-109, and Cys-95-Cys-100. Residues 57-87 (EAEDLQVGQVELGGGPGAGSLQPLALEGSLQ) constitute a propeptide, c peptide.

It belongs to the insulin family. In terms of assembly, heterodimer of a B chain and an A chain linked by two disulfide bonds.

The protein localises to the secreted. Functionally, insulin decreases blood glucose concentration. It increases cell permeability to monosaccharides, amino acids and fatty acids. It accelerates glycolysis, the pentose phosphate cycle, and glycogen synthesis in liver. The chain is Insulin (INS) from Gorilla gorilla gorilla (Western lowland gorilla).